The chain runs to 207 residues: Ribosomal RNA small subunit methyltransferase G (207 aa).

S-adenosyl-L-methionine contacts are provided by residues Gly-73, Leu-78, 124 to 125, and Arg-139; that span reads VE.

This sequence belongs to the methyltransferase superfamily. RNA methyltransferase RsmG family.

It localises to the cytoplasm. It carries out the reaction guanosine(527) in 16S rRNA + S-adenosyl-L-methionine = N(7)-methylguanosine(527) in 16S rRNA + S-adenosyl-L-homocysteine. Specifically methylates the N7 position of guanine in position 527 of 16S rRNA. The protein is Ribosomal RNA small subunit methyltransferase G of Cronobacter sakazakii (strain ATCC BAA-894) (Enterobacter sakazakii).